The chain runs to 314 residues: Taste receptor type 2 member 42 (314 aa).

Over 1-7 (MATELDK) the chain is Extracellular. A helical transmembrane segment spans residues 8–28 (IFLTLAIVEFIIGMLGNVFIG). The Cytoplasmic segment spans residues 29–50 (LANCSEGIKNQKVFSVDFILTC). Residues 51–71 (LAISTIGHLLVILFDSHVAGL) traverse the membrane as a helical segment. At 72-101 (APHLYATDRVVRPVTVLWHMTNHLTTWLAT) the chain is on the extracellular side. Residues 102–122 (CLSIFYFFKIAHFPHSLFLWL) traverse the membrane as a helical segment. The Cytoplasmic portion of the chain corresponds to 123 to 127 (RWRMN). The helical transmembrane segment at 128–148 (RVIAILLTLSLFLLIFDCLVL) threads the bilayer. The Extracellular portion of the chain corresponds to 149 to 187 (EMFIDISLNIIDKSNLTLYLDESKTPYDKLFLLKTLLSL). Residue asparagine 163 is glycosylated (N-linked (GlcNAc...) asparagine). The helical transmembrane segment at 188–208 (NSFIPFSLCLTSLLFLFLSLV) threads the bilayer. At 209–238 (RHTRNLKLSSLGSRDSSTEAHRRAMKMVMS) the chain is on the cytoplasmic side. The chain crosses the membrane as a helical span at residues 239–259 (FLFLFIVHFFSLQVANWTFCI). Residues 260-265 (LGNNKY) lie on the Extracellular side of the membrane. A helical membrane pass occupies residues 266–286 (TQFVMLALHAFPSCHSFILIL). The Cytoplasmic segment spans residues 287–314 (GNSKLRQTAVRLLWHLRNYTKRPNPLPL).

This sequence belongs to the G-protein coupled receptor T2R family.

Its subcellular location is the membrane. Receptor that may play a role in the perception of bitterness and is gustducin-linked. May play a role in sensing the chemical composition of the gastrointestinal content. The activity of this receptor may stimulate alpha gustducin, mediate PLC-beta-2 activation and lead to the gating of TRPM5. This Papio hamadryas (Hamadryas baboon) protein is Taste receptor type 2 member 42 (TAS2R42).